The following is a 147-amino-acid chain: Hemoglobin subunit beta (147 aa).

The 145-residue stretch at 3 to 147 folds into the Globin domain; the sequence is EWTDKERSII…VVSALGKQYH (145 aa). Heme b-binding residues include His64 and His93.

It belongs to the globin family. As to quaternary structure, heterotetramer of two alpha chains and two beta chains. Red blood cells.

Its function is as follows. Involved in oxygen transport from gills to the various peripheral tissues. This is Hemoglobin subunit beta (hbb) from Trematomus hansoni (Striped rockcod).